A 299-amino-acid chain; its full sequence is 33 kDa chaperonin (299 aa).

2 disulfide bridges follow: Cys240–Cys242 and Cys273–Cys276.

It belongs to the HSP33 family. Post-translationally, under oxidizing conditions two disulfide bonds are formed involving the reactive cysteines. Under reducing conditions zinc is bound to the reactive cysteines and the protein is inactive.

The protein resides in the cytoplasm. Its function is as follows. Redox regulated molecular chaperone. Protects both thermally unfolding and oxidatively damaged proteins from irreversible aggregation. Plays an important role in the bacterial defense system toward oxidative stress. This is 33 kDa chaperonin from Thermosynechococcus vestitus (strain NIES-2133 / IAM M-273 / BP-1).